The following is a 292-amino-acid chain: 2-methylisocitrate lyase (292 aa).

44–46 serves as a coordination point for substrate; it reads SGA. Residues D84 and D86 each contribute to the Mg(2+) site. Residues 121–122, R156, E186, 208–210, R239, and R268 contribute to the substrate site; these read CG and NMT.

It belongs to the isocitrate lyase/PEP mutase superfamily. Methylisocitrate lyase family. In terms of assembly, homotetramer; dimer of dimers. Mg(2+) serves as cofactor.

It catalyses the reaction (2S,3R)-3-hydroxybutane-1,2,3-tricarboxylate = pyruvate + succinate. The protein operates within organic acid metabolism; propanoate degradation. Its function is as follows. Involved in the catabolism of short chain fatty acids (SCFA) via the 2-methylcitrate cycle I (propionate degradation route). Catalyzes the thermodynamically favored C-C bond cleavage of (2R,3S)-2-methylisocitrate to yield pyruvate and succinate via an alpha-carboxy-carbanion intermediate. The chain is 2-methylisocitrate lyase from Shewanella oneidensis (strain ATCC 700550 / JCM 31522 / CIP 106686 / LMG 19005 / NCIMB 14063 / MR-1).